A 360-amino-acid polypeptide reads, in one-letter code: Inward rectifier potassium channel 13 (360 aa).

Residues 1–50 (MESSNCKVITPLLSQRHRRMVTKDGHSTLQTDGAPRGLVYLRDAWGTLID) are Cytoplasmic-facing. The helical transmembrane segment at 51-77 (MRWRWVMLVFSASFVLHWLVFAVLWYV) threads the bilayer. At 78–105 (LAEMNGDLELDHDAPPENHTICVKYITS) the chain is on the extracellular side. The helical; Pore-forming intramembrane region spans 106–122 (FTAAFSFSLETQLTIGY). Positions 119–124 (TIGYGT) match the Selectivity filter motif. The Extracellular portion of the chain corresponds to 123–131 (GTMFPSGDC). Residues 132 to 157 (PSAIALLAIQMLLGLMLEAFITGAFV) form a helical membrane-spanning segment. Topologically, residues 158 to 360 (AKIARPKNRA…FQISETGLTE (203 aa)) are cytoplasmic. Serine 201 carries the phosphoserine; by PKC modification. At serine 287 the chain carries Phosphoserine; by PKA.

This sequence belongs to the inward rectifier-type potassium channel (TC 1.A.2.1) family. KCNJ13 subfamily. Homotetramer. Phosphorylation at Ser-201 by PKC strongly inhibits ionic currents, while phosphorylation at Ser-287 by PKA increases them.

The protein localises to the membrane. Its subcellular location is the cell membrane. It catalyses the reaction K(+)(in) = K(+)(out). With respect to regulation, inhibited by Ba(2+) and Cs(+), although sensitivity to those inhibitors is much lower than in other Kir channels. Inward rectifier potassium channels are characterized by a greater tendency to allow potassium to flow into the cell rather than out of it. Their voltage dependence is regulated by the concentration of extracellular potassium; as external potassium is raised, the voltage range of the channel opening shifts to more positive voltages. The inward rectification is mainly due to the blockage of outward current by internal magnesium. KCNJ13 has a very low single channel conductance, low sensitivity to block by external barium and cesium, and no dependence of its inward rectification properties on the internal blocking particle magnesium. This Cavia porcellus (Guinea pig) protein is Inward rectifier potassium channel 13 (KCNJ13).